Consider the following 180-residue polypeptide: Large ribosomal subunit protein uL18m (180 aa).

Belongs to the universal ribosomal protein uL18 family. As to quaternary structure, component of the mitochondrial ribosome large subunit (39S) which comprises a 16S rRNA and about 50 distinct proteins.

The protein localises to the mitochondrion. Together with thiosulfate sulfurtransferase (TST), acts as a mitochondrial import factor for the cytosolic 5S rRNA. The precursor form shows RNA chaperone activity; is able to fold the 5S rRNA into an import-competent conformation that is recognized by rhodanese (TST). Both the cytoplasmic and mitochondrial forms are able to bind to the helix IV-loop D in the gamma domain of the 5S rRNA. This chain is Large ribosomal subunit protein uL18m (Mrpl18), found in Mus musculus (Mouse).